Here is a 185-residue protein sequence, read N- to C-terminus: Photosystem I assembly protein Ycf4 (185 aa).

2 consecutive transmembrane segments (helical) span residues 24-44 and 66-86; these read YLIG…SISS and IIMG…WYLV.

The protein belongs to the Ycf4 family.

The protein localises to the cellular thylakoid membrane. In terms of biological role, seems to be required for the assembly of the photosystem I complex. The sequence is that of Photosystem I assembly protein Ycf4 from Prochlorococcus marinus (strain MIT 9515).